The primary structure comprises 748 residues: Translation factor GUF1 homolog 1, mitochondrial (748 aa).

The N-terminal 29 residues, 1-29 (MRVGCCLLLKPIRQRLCTASISSRHIMRW), are a transit peptide targeting the mitochondrion. The tr-type G domain maps to 94-276 (SHIRNFAVVA…AIIERVPPPT (183 aa)). GTP-binding positions include 103 to 110 (AHVDHGKT), 167 to 171 (DTPGH), and 221 to 224 (TKMD).

Belongs to the TRAFAC class translation factor GTPase superfamily. Classic translation factor GTPase family. LepA subfamily.

The protein resides in the mitochondrion inner membrane. It catalyses the reaction GTP + H2O = GDP + phosphate + H(+). Functionally, promotes mitochondrial protein synthesis. May act as a fidelity factor of the translation reaction, by catalyzing a one-codon backward translocation of tRNAs on improperly translocated ribosomes. Binds to mitochondrial ribosomes in a GTP-dependent manner. In Trypanosoma cruzi (strain CL Brener), this protein is Translation factor GUF1 homolog 1, mitochondrial.